The sequence spans 278 residues: Expansin-B17 (278 aa).

An N-terminal signal peptide occupies residues Met1–Ala26. An Expansin-like EG45 domain is found at Gly66–Lys176. 3 disulfide bridges follow: Cys69–Cys98, Cys101–Cys171, and Cys106–Cys112. The Expansin-like CBD domain occupies Phe189 to Ser270.

Belongs to the expansin family. Expansin B subfamily.

It is found in the secreted. The protein resides in the cell wall. It localises to the membrane. Functionally, may cause loosening and extension of plant cell walls by disrupting non-covalent bonding between cellulose microfibrils and matrix glucans. No enzymatic activity has been found. May be required for rapid internodal elongation in deepwater rice during submergence. In Oryza sativa subsp. japonica (Rice), this protein is Expansin-B17 (EXPB17).